A 635-amino-acid chain; its full sequence is Cytoplasmic polyadenylation element-binding protein 4 (635 aa).

Disordered stretches follow at residues 1–70, 149–284, and 337–369; these read MQDD…TLRL, GFGG…GFNT, and LFPMEDERSYGEDERSDQSLSGLGSPHSFPHQN. The span at 14–30 shows a compositional bias: polar residues; sequence PQLQQESQEGQDKQTLS. A compositionally biased stretch (basic residues) spans 166 to 182; that stretch reads PSPHPHFQHPHNQHRRS. The segment covering 216-231 has biased composition (low complexity); the sequence is GSYQSPSSTPSSTSWS. The segment covering 232 to 241 has biased composition (gly residues); it reads PGGGYGGWGS. Polar residues predominate over residues 254 to 283; the sequence is PLNSISPLKKSFPNNQTQTQKYPRNNSGFN. Over residues 341–353 the composition is skewed to basic and acidic residues; sequence EDERSYGEDERSD. RRM domains are found at residues 378–469 and 486–568; these read RKVF…PWNL and KTIF…PYVL.

The protein belongs to the RRM CPEB family.

The protein resides in the cytoplasm. Its subcellular location is the cell projection. It localises to the dendrite. It is found in the dendritic spine. The protein localises to the postsynaptic density. The protein resides in the axon. Its subcellular location is the growth cone. It localises to the endoplasmic reticulum. It is found in the perinuclear region. Sequence-specific RNA-binding protein that binds to the cytoplasmic polyadenylation element (CPE), an uridine-rich sequence element (consensus sequence 5'-UUUUUAU-3') within the mRNA 3'-UTR. RNA binding results in a clear conformational change analogous to the Venus fly trap mechanism. The chain is Cytoplasmic polyadenylation element-binding protein 4 (cpeb4) from Danio rerio (Zebrafish).